Here is a 72-residue protein sequence, read N- to C-terminus: Protein SlyX homolog (72 aa).

Belongs to the SlyX family.

The polypeptide is Protein SlyX homolog (Bradyrhizobium diazoefficiens (strain JCM 10833 / BCRC 13528 / IAM 13628 / NBRC 14792 / USDA 110)).